We begin with the raw amino-acid sequence, 734 residues long: DNA ligase (734 aa).

NAD(+) contacts are provided by residues 42–46 (DAEYD), 91–92 (SL), and glutamate 125. The active-site N6-AMP-lysine intermediate is the lysine 127. Residues arginine 148, glutamate 185, lysine 301, and lysine 325 each contribute to the NAD(+) site. Zn(2+) is bound by residues cysteine 430, cysteine 433, cysteine 454, and cysteine 460. In terms of domain architecture, BRCT spans 655–734 (SADSEVAGKT…DTWLQRVGKA (80 aa)).

Belongs to the NAD-dependent DNA ligase family. LigA subfamily. Requires Mg(2+) as cofactor. Mn(2+) is required as a cofactor.

It carries out the reaction NAD(+) + (deoxyribonucleotide)n-3'-hydroxyl + 5'-phospho-(deoxyribonucleotide)m = (deoxyribonucleotide)n+m + AMP + beta-nicotinamide D-nucleotide.. DNA ligase that catalyzes the formation of phosphodiester linkages between 5'-phosphoryl and 3'-hydroxyl groups in double-stranded DNA using NAD as a coenzyme and as the energy source for the reaction. It is essential for DNA replication and repair of damaged DNA. This Mesorhizobium japonicum (strain LMG 29417 / CECT 9101 / MAFF 303099) (Mesorhizobium loti (strain MAFF 303099)) protein is DNA ligase.